The primary structure comprises 842 residues: Alanine--tRNA ligase (842 aa).

Residues His-549, His-553, Cys-650, and His-654 each contribute to the Zn(2+) site.

The protein belongs to the class-II aminoacyl-tRNA synthetase family. The cofactor is Zn(2+).

It localises to the cytoplasm. It carries out the reaction tRNA(Ala) + L-alanine + ATP = L-alanyl-tRNA(Ala) + AMP + diphosphate. Its function is as follows. Catalyzes the attachment of alanine to tRNA(Ala) in a two-step reaction: alanine is first activated by ATP to form Ala-AMP and then transferred to the acceptor end of tRNA(Ala). Also edits incorrectly charged Ser-tRNA(Ala) and Gly-tRNA(Ala) via its editing domain. In Campylobacter jejuni subsp. jejuni serotype O:2 (strain ATCC 700819 / NCTC 11168), this protein is Alanine--tRNA ligase.